Reading from the N-terminus, the 149-residue chain is 3-dehydroquinate dehydratase (149 aa).

Tyrosine 26 serves as the catalytic Proton acceptor. Residues asparagine 77, histidine 83, and aspartate 90 each contribute to the substrate site. Histidine 103 serves as the catalytic Proton donor. Residues 104–105 (LS) and arginine 114 each bind substrate.

It belongs to the type-II 3-dehydroquinase family. Homododecamer.

It catalyses the reaction 3-dehydroquinate = 3-dehydroshikimate + H2O. It functions in the pathway metabolic intermediate biosynthesis; chorismate biosynthesis; chorismate from D-erythrose 4-phosphate and phosphoenolpyruvate: step 3/7. Functionally, catalyzes a trans-dehydration via an enolate intermediate. The sequence is that of 3-dehydroquinate dehydratase from Haemophilus influenzae (strain PittEE).